Reading from the N-terminus, the 493-residue chain is Cysteine--tRNA ligase (493 aa).

Cysteine 29 is a Zn(2+) binding site. The 'HIGH' region motif lies at 31 to 41 (VTVYDYCHIGH). 3 residues coordinate Zn(2+): cysteine 209, histidine 234, and glutamate 238. The 'KMSKS' region signature appears at 266–270 (KMSKS). An ATP-binding site is contributed by lysine 269.

This sequence belongs to the class-I aminoacyl-tRNA synthetase family. In terms of assembly, monomer. Requires Zn(2+) as cofactor.

It localises to the cytoplasm. The catalysed reaction is tRNA(Cys) + L-cysteine + ATP = L-cysteinyl-tRNA(Cys) + AMP + diphosphate. This chain is Cysteine--tRNA ligase, found in Pelobacter propionicus (strain DSM 2379 / NBRC 103807 / OttBd1).